The sequence spans 110 residues: Phosphoribosyl-AMP cyclohydrolase (110 aa).

Mg(2+) is bound at residue D74. C75 serves as a coordination point for Zn(2+). Mg(2+) contacts are provided by D76 and D78. 2 residues coordinate Zn(2+): C91 and C98.

It belongs to the PRA-CH family. As to quaternary structure, homodimer. The cofactor is Mg(2+). Zn(2+) is required as a cofactor.

The protein localises to the cytoplasm. It catalyses the reaction 1-(5-phospho-beta-D-ribosyl)-5'-AMP + H2O = 1-(5-phospho-beta-D-ribosyl)-5-[(5-phospho-beta-D-ribosylamino)methylideneamino]imidazole-4-carboxamide. Its pathway is amino-acid biosynthesis; L-histidine biosynthesis; L-histidine from 5-phospho-alpha-D-ribose 1-diphosphate: step 3/9. Catalyzes the hydrolysis of the adenine ring of phosphoribosyl-AMP. In Lacticaseibacillus paracasei (strain ATCC 334 / BCRC 17002 / CCUG 31169 / CIP 107868 / KCTC 3260 / NRRL B-441) (Lactobacillus paracasei), this protein is Phosphoribosyl-AMP cyclohydrolase.